A 413-amino-acid chain; its full sequence is Peptidase T (413 aa).

Residue His84 participates in Zn(2+) binding. Asp86 is an active-site residue. Asp146 provides a ligand contact to Zn(2+). The active-site Proton acceptor is Glu180. Residues Glu181, Asp203, and His385 each coordinate Zn(2+).

This sequence belongs to the peptidase M20B family. Zn(2+) is required as a cofactor.

It localises to the cytoplasm. The catalysed reaction is Release of the N-terminal residue from a tripeptide.. Cleaves the N-terminal amino acid of tripeptides. This Limosilactobacillus fermentum (strain NBRC 3956 / LMG 18251) (Lactobacillus fermentum) protein is Peptidase T.